The sequence spans 403 residues: S-adenosylmethionine synthase (403 aa).

His-15 provides a ligand contact to ATP. Mg(2+) is bound at residue Asp-17. Residue Glu-43 coordinates K(+). The L-methionine site is built by Glu-56 and Gln-99. The interval 99–109 is flexible loop; it reads QSPDINQGVDR. ATP-binding positions include 166–168, 232–233, Asp-241, 247–248, Ala-264, and Lys-268; these read DAK, KF, and RK. Asp-241 lines the L-methionine pocket. Residue Lys-272 coordinates L-methionine.

The protein belongs to the AdoMet synthase family. As to quaternary structure, homotetramer; dimer of dimers. Mg(2+) is required as a cofactor. The cofactor is K(+).

It is found in the cytoplasm. The enzyme catalyses L-methionine + ATP + H2O = S-adenosyl-L-methionine + phosphate + diphosphate. The protein operates within amino-acid biosynthesis; S-adenosyl-L-methionine biosynthesis; S-adenosyl-L-methionine from L-methionine: step 1/1. Its function is as follows. Catalyzes the formation of S-adenosylmethionine (AdoMet) from methionine and ATP. The overall synthetic reaction is composed of two sequential steps, AdoMet formation and the subsequent tripolyphosphate hydrolysis which occurs prior to release of AdoMet from the enzyme. The sequence is that of S-adenosylmethionine synthase from Xanthomonas campestris pv. campestris (strain 8004).